The primary structure comprises 291 residues: RPE-retinal G protein-coupled receptor (291 aa).

Residues 1–15 (MAESGTLPTGFGELE) lie on the Extracellular side of the membrane. A helical membrane pass occupies residues 16–36 (VLAVGTVLLVEALSGLSLNIL). Residues 37 to 52 (TILSFCKTPELRTPSH) are Cytoplasmic-facing. The chain crosses the membrane as a helical span at residues 53-73 (LLVLSLALADSGISLNALVAA). Topologically, residues 74–91 (TSSLLRRWPYGSEGCQAH) are extracellular. A disulfide bridge links C88 with C162. Residues 92–112 (GFQGFVTALASICSSAAVAWG) form a helical membrane-spanning segment. The Cytoplasmic segment spans residues 113-130 (RYHHFCTRSRLDWNTAVS). The chain crosses the membrane as a helical span at residues 131-151 (LVFFVWLSSAFWAALPLLGWG). The Extracellular segment spans residues 152 to 175 (HYDYEPLGTCCTLDYSRGDRNFTS). N172 carries an N-linked (GlcNAc...) asparagine glycan. A helical membrane pass occupies residues 176 to 196 (FLFTMAFFNFLLPLFITVVSY). At 197–219 (RLMEQKLGKTSRPPVNTVLPART) the chain is on the cytoplasmic side. A helical transmembrane segment spans residues 220–240 (LLLGWGPYALLYLYATIADAT). At 241–247 (SISPKLQ) the chain is on the extracellular side. The helical transmembrane segment at 248–268 (MVPALIAKAVPTVNAMNYALG) threads the bilayer. Position 255 is an N6-(retinylidene)lysine (K255). The Cytoplasmic segment spans residues 269 to 291 (SEMVHRGIWQCLSPQRREHSREQ).

Belongs to the G-protein coupled receptor 1 family. Opsin subfamily. Covalently binds all-trans- and 11-cis-retinal. As to expression, preferentially expressed at high levels in the retinal pigment epithelium (RPE) and Mueller cells of the neural retina.

It is found in the membrane. Its function is as follows. Receptor for all-trans- and 11-cis-retinal. Binds preferentially to the former and may catalyze the isomerization of the chromophore by a retinochrome-like mechanism. The protein is RPE-retinal G protein-coupled receptor (RGR) of Bos taurus (Bovine).